The following is a 132-amino-acid chain: Large ribosomal subunit protein uL22c (132 aa).

This sequence belongs to the universal ribosomal protein uL22 family. Part of the 50S ribosomal subunit.

The protein resides in the plastid. Its subcellular location is the chloroplast. Its function is as follows. This protein binds specifically to 23S rRNA. Functionally, the globular domain of the protein is located near the polypeptide exit tunnel on the outside of the subunit, while an extended beta-hairpin is found that lines the wall of the exit tunnel in the center of the 70S ribosome. The sequence is that of Large ribosomal subunit protein uL22c (rpl22) from Staurastrum punctulatum (Green alga).